Here is a 483-residue protein sequence, read N- to C-terminus: UDP-N-acetylmuramoyl-L-alanyl-D-glutamate--L-lysine ligase (483 aa).

Ser-44 serves as a coordination point for UDP-N-acetyl-alpha-D-muramoyl-L-alanyl-D-glutamate. Residue 120–126 (GTKGKTT) coordinates ATP. UDP-N-acetyl-alpha-D-muramoyl-L-alanyl-D-glutamate contacts are provided by residues 162 to 163 (TT), Ser-189, and Arg-197. Position 231 is an N6-carboxylysine (Lys-231). An L-lysine recognition motif motif is present at residues 406-409 (DDPN).

Belongs to the MurCDEF family. MurE subfamily. Carboxylation is probably crucial for Mg(2+) binding and, consequently, for the gamma-phosphate positioning of ATP.

It localises to the cytoplasm. It carries out the reaction UDP-N-acetyl-alpha-D-muramoyl-L-alanyl-D-glutamate + L-lysine + ATP = UDP-N-acetyl-alpha-D-muramoyl-L-alanyl-gamma-D-glutamyl-L-lysine + ADP + phosphate + H(+). It participates in cell wall biogenesis; peptidoglycan biosynthesis. In terms of biological role, catalyzes the addition of L-lysine to the nucleotide precursor UDP-N-acetylmuramoyl-L-alanyl-D-glutamate (UMAG) in the biosynthesis of bacterial cell-wall peptidoglycan. The chain is UDP-N-acetylmuramoyl-L-alanyl-D-glutamate--L-lysine ligase from Streptococcus mutans serotype c (strain ATCC 700610 / UA159).